The primary structure comprises 113 residues: Hemerythrin (113 aa).

Residues H25, H54, E58, H73, H77, H101, and D106 each coordinate Fe cation.

This sequence belongs to the hemerythrin family. In terms of assembly, homooctamer.

Hemerythrin is a respiratory protein in blood cells of certain marine worms. The oxygen-binding site in each chain contains two iron atoms. The sequence is that of Hemerythrin from Themiste dyscrita (Peanut worm).